We begin with the raw amino-acid sequence, 335 residues long: MVNVGINGFGRIGRIVFRNALEVGGVDVVAINDPFIDLDYMVYMFKYDSVHGRFKGSIEAKDGKLIVEGKPIHIFAEKDPANIPWGSVGADYVVESTGVFTTIDKASAHLKGGEKVVISAPSADAPMFVCGVNLETYDPKYKVISNASSTTNCLTPLAKVIHDKFGIVEGLISTIHATTATQKTVDGPSHKDWRGGRSVNNNIIPSSTGAANWVGKVIPSLNGKLTGLSFRVPTLDVSVVDLVVRLEKPADYKEIVAAIKEASETTHKGILGFTSDSVVSTDFVGSTDSSIFDSTAGIQLNPNFVKLIAWYDNEYGYSRRVVDLLKYVAEKDGAQ.

Residues arginine 11–isoleucine 12, aspartate 33, and lysine 78 each bind NAD(+). Residues serine 148–threonine 150, threonine 179, threonine 208–glycine 209, and arginine 231 each bind D-glyceraldehyde 3-phosphate. Asparagine 313 provides a ligand contact to NAD(+).

Belongs to the glyceraldehyde-3-phosphate dehydrogenase family. As to quaternary structure, homotetramer.

Its subcellular location is the cytoplasm. It carries out the reaction D-glyceraldehyde 3-phosphate + phosphate + NAD(+) = (2R)-3-phospho-glyceroyl phosphate + NADH + H(+). It functions in the pathway carbohydrate degradation; glycolysis; pyruvate from D-glyceraldehyde 3-phosphate: step 1/5. In Pleurotus sajor-caju (Oyster mushroom), this protein is Glyceraldehyde-3-phosphate dehydrogenase (GPD).